Consider the following 373-residue polypeptide: Structure-specific endonuclease subunit EME2 (373 aa).

The disordered stretch occupies residues 24-52; that stretch reads RPQTWEISDSDGEGVPAREVGTQAPSPAG. Residues 47–260 are nuclease-like domain; forms the post-nick DNA binding interface and is involved in DNA recognition and bending; sequence APSPAGERRA…LPSKQHRDSQ (214 aa). The segment at 282 to 373 is helix-hairpin-helix (2HhH); forms the pre-nick DNA binding interface and is involved in DNA recognition and bending; the sequence is GLRGVWWRQI…NPDLLLDLSS (92 aa).

It belongs to the EME1/MMS4 family. As to quaternary structure, part of the heterodimeric MUS81-EME2 complex; the complex forms specifically during the DNA replication phase of the cell cycle.

Its subcellular location is the nucleus. In terms of biological role, non-catalytic subunit of the structure-specific, heterodimeric DNA endonuclease MUS81-EME2 which is involved in the maintenance of genome stability. In the complex, EME2 is required for DNA cleavage, participating in DNA recognition and bending. MUS81-EME2 cleaves 3'-flaps and nicked Holliday junctions, and exhibit limited endonuclease activity with 5' flaps and nicked double-stranded DNAs. MUS81-EME2 which is active during the replication of DNA is more specifically involved in replication fork processing. Replication forks frequently encounter obstacles to their passage, including DNA base lesions, DNA interstrand cross-links, difficult-to-replicate sequences, transcription bubbles, or tightly bound proteins. One mechanism for the restart of a stalled replication fork involves nucleolytic cleavage mediated by the MUS81-EME2 endonuclease. By acting upon the stalled fork, MUS81-EME2 generates a DNA double-strand break (DSB) that can be repaired by homologous recombination, leading to the restoration of an active fork. MUS81-EME2 could also function in telomere maintenance. The chain is Structure-specific endonuclease subunit EME2 from Mus musculus (Mouse).